The primary structure comprises 178 residues: Large ribosomal subunit protein uL5 (178 aa).

Position 2 is an N-acetylalanine (A2). Residue K38 forms a Glycyl lysine isopeptide (Lys-Gly) (interchain with G-Cter in SUMO2) linkage. T44 and T47 each carry phosphothreonine. N6-acetyllysine; alternate is present on K52. K52 is covalently cross-linked (Glycyl lysine isopeptide (Lys-Gly) (interchain with G-Cter in SUMO2); alternate). An N6-acetyllysine modification is found at K85. A Glycyl lysine isopeptide (Lys-Gly) (interchain with G-Cter in SUMO2) cross-link involves residue K154.

The protein belongs to the universal ribosomal protein uL5 family. Component of the large ribosomal subunit (LSU). Part of the 5S RNP complex, which is a LSU subcomplex composed of the 5S RNA, RPL5 and RPL11. Component of a hexameric 5S RNP precursor complex, composed of 5S RNA, RRS1, RPF2/BXDC1, RPL5, RPL11 and HEATR3; this complex acts as a precursor for ribosome assembly. Interacts with PML. Interacts with MDM2 (via its RanBP2-type zinc finger domain); negatively regulates MDM2-mediated TP53 ubiquitination and degradation. Interacts with NOP53; retains RPL11 into the nucleolus.

The protein resides in the nucleus. It localises to the nucleolus. It is found in the cytoplasm. Functionally, component of the ribosome, a large ribonucleoprotein complex responsible for the synthesis of proteins in the cell. The small ribosomal subunit (SSU) binds messenger RNAs (mRNAs) and translates the encoded message by selecting cognate aminoacyl-transfer RNA (tRNA) molecules. The large subunit (LSU) contains the ribosomal catalytic site termed the peptidyl transferase center (PTC), which catalyzes the formation of peptide bonds, thereby polymerizing the amino acids delivered by tRNAs into a polypeptide chain. The nascent polypeptides leave the ribosome through a tunnel in the LSU and interact with protein factors that function in enzymatic processing, targeting, and the membrane insertion of nascent chains at the exit of the ribosomal tunnel. As part of the 5S RNP/5S ribonucleoprotein particle it is an essential component of the LSU, required for its formation and the maturation of rRNAs. It also couples ribosome biogenesis to p53/TP53 activation. As part of the 5S RNP it accumulates in the nucleoplasm and inhibits MDM2, when ribosome biogenesis is perturbed, mediating the stabilization and the activation of TP53. Promotes nucleolar location of PML. The protein is Large ribosomal subunit protein uL5 (RPL11) of Oryctolagus cuniculus (Rabbit).